Consider the following 155-residue polypeptide: SsrA-binding protein (155 aa).

A compositionally biased stretch (basic and acidic residues) spans Thr135–Lys147. The segment at Thr135 to Arg155 is disordered.

This sequence belongs to the SmpB family.

It localises to the cytoplasm. Functionally, required for rescue of stalled ribosomes mediated by trans-translation. Binds to transfer-messenger RNA (tmRNA), required for stable association of tmRNA with ribosomes. tmRNA and SmpB together mimic tRNA shape, replacing the anticodon stem-loop with SmpB. tmRNA is encoded by the ssrA gene; the 2 termini fold to resemble tRNA(Ala) and it encodes a 'tag peptide', a short internal open reading frame. During trans-translation Ala-aminoacylated tmRNA acts like a tRNA, entering the A-site of stalled ribosomes, displacing the stalled mRNA. The ribosome then switches to translate the ORF on the tmRNA; the nascent peptide is terminated with the 'tag peptide' encoded by the tmRNA and targeted for degradation. The ribosome is freed to recommence translation, which seems to be the essential function of trans-translation. The protein is SsrA-binding protein of Streptococcus pyogenes serotype M12 (strain MGAS2096).